The chain runs to 185 residues: MIDEALFDAEEKMEKAVAVARDDLSTIRTGRANPGMFSRITIDYYGAATLITQLASINVPEARLVVIKPYEANQLRAIETAIRNSDLGVNPTNDGALIRVAVPQLTEERRRELVKQAKHKGEEAKVSVRNIRRKAMEELHRIRKEGEAGEDEVGRAEKDLDKTTHQYVTQIDELVKHKEGELLEV.

This sequence belongs to the RRF family.

The protein localises to the cytoplasm. Responsible for the release of ribosomes from messenger RNA at the termination of protein biosynthesis. May increase the efficiency of translation by recycling ribosomes from one round of translation to another. The polypeptide is Ribosome-recycling factor (Mycobacterium bovis (strain BCG / Pasteur 1173P2)).